The chain runs to 231 residues: Chromosome partition protein MukE (231 aa).

The disordered stretch occupies residues 204-231 (TPEPSQQSLLENPTAEYDEEQTEWEDEA). The segment covering 219-231 (EYDEEQTEWEDEA) has biased composition (acidic residues).

The protein belongs to the MukE family. In terms of assembly, interacts, and probably forms a ternary complex, with MukF and MukB. The complex formation is stimulated by calcium or magnesium.

The protein resides in the cytoplasm. It localises to the nucleoid. Its function is as follows. Involved in chromosome condensation, segregation and cell cycle progression. May participate in facilitating chromosome segregation by condensation DNA from both sides of a centrally located replisome during cell division. Probably acts via its interaction with MukB and MukF. The polypeptide is Chromosome partition protein MukE (Vibrio cholerae serotype O1 (strain ATCC 39315 / El Tor Inaba N16961)).